We begin with the raw amino-acid sequence, 342 residues long: N-acetyl-gamma-glutamyl-phosphate reductase (342 aa).

Cys-146 is a catalytic residue.

Belongs to the NAGSA dehydrogenase family. Type 1 subfamily.

It is found in the cytoplasm. The enzyme catalyses N-acetyl-L-glutamate 5-semialdehyde + phosphate + NADP(+) = N-acetyl-L-glutamyl 5-phosphate + NADPH + H(+). It participates in amino-acid biosynthesis; L-arginine biosynthesis; N(2)-acetyl-L-ornithine from L-glutamate: step 3/4. Catalyzes the NADPH-dependent reduction of N-acetyl-5-glutamyl phosphate to yield N-acetyl-L-glutamate 5-semialdehyde. The sequence is that of N-acetyl-gamma-glutamyl-phosphate reductase from Streptomyces coelicolor (strain ATCC BAA-471 / A3(2) / M145).